A 528-amino-acid chain; its full sequence is Peptide chain release factor 3 (528 aa).

Residues arginine 9–arginine 280 enclose the tr-type G domain. GTP contacts are provided by residues serine 18–threonine 25, aspartate 86–histidine 90, and asparagine 140–aspartate 143.

This sequence belongs to the TRAFAC class translation factor GTPase superfamily. Classic translation factor GTPase family. PrfC subfamily.

It localises to the cytoplasm. In terms of biological role, increases the formation of ribosomal termination complexes and stimulates activities of RF-1 and RF-2. It binds guanine nucleotides and has strong preference for UGA stop codons. It may interact directly with the ribosome. The stimulation of RF-1 and RF-2 is significantly reduced by GTP and GDP, but not by GMP. The sequence is that of Peptide chain release factor 3 from Symbiobacterium thermophilum (strain DSM 24528 / JCM 14929 / IAM 14863 / T).